The sequence spans 133 residues: Phosphomevalonate dehydratase small subunit (133 aa).

Residue Ser62 is the Proton acceptor of the active site.

This sequence belongs to the AcnX type II small subunit family. As to quaternary structure, heterodimer composed of a large subunit (PMDh-L) and a small subunit (PMDh-S).

It catalyses the reaction (R)-5-phosphomevalonate = (2E)-3-methyl-5-phosphooxypent-2-enoate + H2O. Its pathway is isoprenoid biosynthesis; isopentenyl diphosphate biosynthesis via mevalonate pathway. Functionally, component of a hydro-lyase that catalyzes the dehydration of mevalonate 5-phosphate (MVA5P) to form trans-anhydromevalonate 5-phosphate (tAHMP). Involved in the archaeal mevalonate (MVA) pathway, which provides fundamental precursors for isoprenoid biosynthesis, such as isopentenyl diphosphate (IPP) and dimethylallyl diphosphate (DMAPP). The chain is Phosphomevalonate dehydratase small subunit from Thermococcus kodakarensis (strain ATCC BAA-918 / JCM 12380 / KOD1) (Pyrococcus kodakaraensis (strain KOD1)).